The following is a 275-amino-acid chain: Large ribosomal subunit protein uL2 (275 aa).

Positions 212–275 are disordered; the sequence is NRHRGIRPQT…DKLIISRRKK (64 aa). Basic residues predominate over residues 257–275; that stretch reads YKTRRKKPSDKLIISRRKK.

Belongs to the universal ribosomal protein uL2 family. As to quaternary structure, part of the 50S ribosomal subunit. Forms a bridge to the 30S subunit in the 70S ribosome.

In terms of biological role, one of the primary rRNA binding proteins. Required for association of the 30S and 50S subunits to form the 70S ribosome, for tRNA binding and peptide bond formation. It has been suggested to have peptidyltransferase activity; this is somewhat controversial. Makes several contacts with the 16S rRNA in the 70S ribosome. In Nitratiruptor sp. (strain SB155-2), this protein is Large ribosomal subunit protein uL2.